Consider the following 405-residue polypeptide: Replication factor C large subunit (405 aa).

Residue 47 to 54 (GPPGVGKT) participates in ATP binding.

It belongs to the activator 1 small subunits family. RfcL subfamily. As to quaternary structure, heteromultimer composed of small subunits (RfcS) and large subunits (RfcL).

Functionally, part of the RFC clamp loader complex which loads the PCNA sliding clamp onto DNA. This is Replication factor C large subunit from Saccharolobus islandicus (strain M.16.27) (Sulfolobus islandicus).